A 183-amino-acid polypeptide reads, in one-letter code: Chromophore lyase CpcT/CpeT 4 (183 aa).

The protein belongs to the CpcT/CpeT biliprotein lyase family.

Its function is as follows. Covalently attaches a chromophore to Cys residue(s) of phycobiliproteins. This Gloeobacter violaceus (strain ATCC 29082 / PCC 7421) protein is Chromophore lyase CpcT/CpeT 4.